The following is a 185-amino-acid chain: Ribosome-recycling factor (185 aa).

The protein belongs to the RRF family.

Its subcellular location is the cytoplasm. Responsible for the release of ribosomes from messenger RNA at the termination of protein biosynthesis. May increase the efficiency of translation by recycling ribosomes from one round of translation to another. In Shouchella clausii (strain KSM-K16) (Alkalihalobacillus clausii), this protein is Ribosome-recycling factor.